A 321-amino-acid polypeptide reads, in one-letter code: Chloroplastic calcium uniporter protein (321 aa).

The transit peptide at 1–56 (MSSKKSLVQSLFNISKTYSRISGLTRMRPTKSGGIPPDAGDSGIRRRFLHKRAFFS) directs the protein to the chloroplast. 2 helical membrane passes run 223–243 (LWAG…LTFW) and 249–269 (VMEP…YAFF). The Selectivity filter signature appears at 247–255 (WDVMEPICF). Position 251 (Glu-251) interacts with Ca(2+).

Belongs to the MCU (TC 1.A.77) family.

The protein localises to the plastid. The protein resides in the chloroplast membrane. It carries out the reaction Ca(2+)(in) = Ca(2+)(out). Chloroplastic membrane calcium uniporter that mediates calcium uptake into chloroplast stroma. Constitutes a pore-forming and calcium-conducting subunit. Chloroplastic calcium homeostasis plays key roles in cellular physiology. Promotes calcium uptake into chloroplast stroma in response to osmotic-stress, fine-tuning cytosolic MAPK3/MAPK6 phosphorylation and affecting stomata opening. In Arabidopsis thaliana (Mouse-ear cress), this protein is Chloroplastic calcium uniporter protein.